Reading from the N-terminus, the 392-residue chain is Chorismate synthase (392 aa).

Positions 39 and 45 each coordinate NADP(+). FMN contacts are provided by residues 131–133, 255–256, glycine 300, 315–319, and arginine 341; these read RSS, NA, and KPIPT.

This sequence belongs to the chorismate synthase family. Homotetramer. It depends on FMNH2 as a cofactor.

The catalysed reaction is 5-O-(1-carboxyvinyl)-3-phosphoshikimate = chorismate + phosphate. The protein operates within metabolic intermediate biosynthesis; chorismate biosynthesis; chorismate from D-erythrose 4-phosphate and phosphoenolpyruvate: step 7/7. In terms of biological role, catalyzes the anti-1,4-elimination of the C-3 phosphate and the C-6 proR hydrogen from 5-enolpyruvylshikimate-3-phosphate (EPSP) to yield chorismate, which is the branch point compound that serves as the starting substrate for the three terminal pathways of aromatic amino acid biosynthesis. This reaction introduces a second double bond into the aromatic ring system. This Leuconostoc mesenteroides subsp. mesenteroides (strain ATCC 8293 / DSM 20343 / BCRC 11652 / CCM 1803 / JCM 6124 / NCDO 523 / NBRC 100496 / NCIMB 8023 / NCTC 12954 / NRRL B-1118 / 37Y) protein is Chorismate synthase.